Consider the following 26-residue polypeptide: Omega-conotoxin TVIA (26 aa).

Disulfide bonds link cysteine 1/cysteine 16, cysteine 8/cysteine 19, and cysteine 15/cysteine 26. A 4-hydroxyproline mark is found at proline 4, proline 10, and proline 21.

The protein belongs to the conotoxin O1 superfamily. As to expression, expressed by the venom duct.

It localises to the secreted. Omega-conotoxins act at presynaptic membranes, they bind and block voltage-gated calcium channels (Cav). The protein is Omega-conotoxin TVIA of Conus tulipa (Fish-hunting cone snail).